Consider the following 335-residue polypeptide: MGRVKLEIKRIENTTNRQVTFSKRRNGLIKKAYELSILCDIDIALIMFSPSDRLSLFSGKTRIEDVFSRFINLPKQERESALYFPDQNRRPDIQNKECLLRILQQLKTENDIALQVTNPAAINSDVEELEHEVCRLQQQLQMAEEELRRYEPDPIRFTTMEEYEVSEKQLLDTLTHVVQRRDHLMSNHLSSYEASTMQPNIGGPFVNDVVEGWLPENGTNQTHLFDASAHSNQLRELSSAMYEPLLQGSSSSSNQNNMSECHVTNHNGEMFPEWAQAYSSSALFASMQQQHEGVGPSIEEMMPAQQSDIPGVTAETQVDHEVSDYETKVPQLSSQ.

Residues 1 to 61 (MGRVKLEIKR…DRLSLFSGKT (61 aa)) enclose the MADS-box domain. Residues 124-151 (SDVEELEHEVCRLQQQLQMAEEELRRYE) are a coiled coil. The tract at residues 302 to 335 (MPAQQSDIPGVTAETQVDHEVSDYETKVPQLSSQ) is disordered. Residues 317-327 (QVDHEVSDYET) are compositionally biased toward basic and acidic residues.

As to quaternary structure, forms heterodimers with AGL30 and AGL65. As to expression, expressed in pollen.

It localises to the nucleus. Functionally, probable transcription factor that forms heterodimers with the MADS-box proteins AGL30 and AGL65 and is involved in the regulation of pollen maturation at the late stages of pollen development and pollen tube growth. The chain is Agamous-like MADS-box protein AGL104 from Arabidopsis thaliana (Mouse-ear cress).